We begin with the raw amino-acid sequence, 292 residues long: Cytochrome c1, heme protein, mitochondrial (292 aa).

A mitochondrion-targeting transit peptide spans Met1–Ala46. Residues Met47–Arg253 are Mitochondrial intermembrane-facing. The Cytochrome c domain occupies Ser73–Pro226. Residues Cys86, Cys89, and His90 each coordinate heme c. The segment at Phe117–Ala137 is disordered. Residue Met210 coordinates heme c. The helical transmembrane segment at Leu254–Val272 threads the bilayer. The Mitochondrial matrix segment spans residues Lys273 to Lys292.

It belongs to the cytochrome c family. In terms of assembly, component of the ubiquinol-cytochrome c oxidoreductase (cytochrome b-c1 complex, complex III, CIII), a multisubunit enzyme composed of 3 respiratory subunits cytochrome b, cytochrome c1 and Rieske protein, 2 core protein subunits, and additional low-molecular weight protein subunits. The complex exists as an obligatory dimer and forms supercomplexes (SCs) in the inner mitochondrial membrane with cytochrome c oxidase (complex IV, CIV). It depends on heme c as a cofactor.

The protein resides in the mitochondrion inner membrane. The enzyme catalyses a quinol + 2 Fe(III)-[cytochrome c](out) = a quinone + 2 Fe(II)-[cytochrome c](out) + 2 H(+)(out). Functionally, component of the ubiquinol-cytochrome c oxidoreductase, a multisubunit transmembrane complex that is part of the mitochondrial electron transport chain which drives oxidative phosphorylation. The respiratory chain contains 3 multisubunit complexes succinate dehydrogenase (complex II, CII), ubiquinol-cytochrome c oxidoreductase (cytochrome b-c1 complex, complex III, CIII) and cytochrome c oxidase (complex IV, CIV), that cooperate to transfer electrons derived from NADH and succinate to molecular oxygen, creating an electrochemical gradient over the inner membrane that drives transmembrane transport and the ATP synthase. The cytochrome b-c1 complex catalyzes electron transfer from ubiquinol to cytochrome c, linking this redox reaction to translocation of protons across the mitochondrial inner membrane, with protons being carried across the membrane as hydrogens on the quinol. In the process called Q cycle, 2 protons are consumed from the matrix, 4 protons are released into the intermembrane space and 2 electrons are passed to cytochrome c. Cytochrome c1 is a catalytic core subunit containing a c-type heme. It transfers electrons from the [2Fe-2S] iron-sulfur cluster of the Rieske protein to cytochrome c. In Kluyveromyces lactis (strain ATCC 8585 / CBS 2359 / DSM 70799 / NBRC 1267 / NRRL Y-1140 / WM37) (Yeast), this protein is Cytochrome c1, heme protein, mitochondrial (CYT1).